The following is a 66-amino-acid chain: COP-associated protein (66 aa).

Residues 1 to 66 form the HMA domain; sequence MKATFQVPSI…ALLDAGQEVV (66 aa). Cu cation is bound by residues cysteine 12 and cysteine 15. Cysteine 12 and cysteine 15 are oxidised to a cystine.

In terms of biological role, part of a cation-transporting system which is associated with copper export out of the H.pylori cells. This Helicobacter pylori (strain ATCC 700392 / 26695) (Campylobacter pylori) protein is COP-associated protein (copP).